The primary structure comprises 249 residues: 3-deoxy-manno-octulosonate cytidylyltransferase (249 aa).

Belongs to the KdsB family.

It is found in the cytoplasm. It catalyses the reaction 3-deoxy-alpha-D-manno-oct-2-ulosonate + CTP = CMP-3-deoxy-beta-D-manno-octulosonate + diphosphate. The protein operates within nucleotide-sugar biosynthesis; CMP-3-deoxy-D-manno-octulosonate biosynthesis; CMP-3-deoxy-D-manno-octulosonate from 3-deoxy-D-manno-octulosonate and CTP: step 1/1. Its pathway is bacterial outer membrane biogenesis; lipopolysaccharide biosynthesis. Activates KDO (a required 8-carbon sugar) for incorporation into bacterial lipopolysaccharide in Gram-negative bacteria. This Aliivibrio salmonicida (strain LFI1238) (Vibrio salmonicida (strain LFI1238)) protein is 3-deoxy-manno-octulosonate cytidylyltransferase.